The sequence spans 95 residues: Small ribosomal subunit protein bS20 (95 aa).

Belongs to the bacterial ribosomal protein bS20 family.

Functionally, binds directly to 16S ribosomal RNA. The protein is Small ribosomal subunit protein bS20 of Ehrlichia ruminantium (strain Gardel).